The sequence spans 521 residues: Outer membrane protein assembly factor BamB (521 aa).

The N-terminal stretch at 1-19 (MKKLFLVIVPLLLSLLATS) is a signal peptide. A lipid anchor (N-palmitoyl cysteine) is attached at Cys-20. Residue Cys-20 is the site of S-diacylglycerol cysteine attachment. Residues 418-521 (KSGSIESSPK…IGDFSKGDSD (104 aa)) form a disordered region. A compositionally biased stretch (basic and acidic residues) spans 429 to 444 (LPDKKVDSNKTSKNDT). Residues 445 to 477 (DSNPATTATSTKDIQNPANQEMINSTPVSNTST) show a composition bias toward polar residues.

It belongs to the BamB family. As to quaternary structure, part of the Bam complex.

Its subcellular location is the cell outer membrane. Part of the outer membrane protein assembly complex, which is involved in assembly and insertion of beta-barrel proteins into the outer membrane. The protein is Outer membrane protein assembly factor BamB of Francisella salina.